The chain runs to 311 residues: Acetyl-coenzyme A carboxylase carboxyl transferase subunit alpha (311 aa).

The region spanning Glu32 to Gln289 is the CoA carboxyltransferase C-terminal domain.

Belongs to the AccA family. As to quaternary structure, acetyl-CoA carboxylase is a heterohexamer composed of biotin carboxyl carrier protein (AccB), biotin carboxylase (AccC) and two subunits each of ACCase subunit alpha (AccA) and ACCase subunit beta (AccD).

Its subcellular location is the cytoplasm. The enzyme catalyses N(6)-carboxybiotinyl-L-lysyl-[protein] + acetyl-CoA = N(6)-biotinyl-L-lysyl-[protein] + malonyl-CoA. The protein operates within lipid metabolism; malonyl-CoA biosynthesis; malonyl-CoA from acetyl-CoA: step 1/1. Component of the acetyl coenzyme A carboxylase (ACC) complex. First, biotin carboxylase catalyzes the carboxylation of biotin on its carrier protein (BCCP) and then the CO(2) group is transferred by the carboxyltransferase to acetyl-CoA to form malonyl-CoA. The protein is Acetyl-coenzyme A carboxylase carboxyl transferase subunit alpha of Exiguobacterium sibiricum (strain DSM 17290 / CCUG 55495 / CIP 109462 / JCM 13490 / 255-15).